The sequence spans 66 residues: Large ribosomal subunit protein bL35 (66 aa).

Over residues methionine 1–phenylalanine 14 the composition is skewed to basic residues. The interval methionine 1 to isoleucine 34 is disordered.

Belongs to the bacterial ribosomal protein bL35 family.

The polypeptide is Large ribosomal subunit protein bL35 (Paracoccus denitrificans (strain Pd 1222)).